A 223-amino-acid polypeptide reads, in one-letter code: Icarapin (223 aa).

Residues Met-1–Ser-19 form the signal peptide. Asn-126, Asn-142, Asn-168, and Asn-193 each carry an N-linked (GlcNAc...) asparagine glycan. A compositionally biased stretch (polar residues) spans Leu-186–Val-203. The interval Leu-186–Ala-223 is disordered.

As to expression, expressed by the venom duct.

It is found in the secreted. The protein is Icarapin of Apis mellifera carnica (Carniolan honeybee).